We begin with the raw amino-acid sequence, 69 residues long: Omega-oxotoxin-Ol1a (69 aa).

Residues 1-68 (DWECLPLHSS…GKINTCDKYK (68 aa)) enclose the Oxytoxin-type inhibitor cystine knot (ICK) domain. 5 disulfide bridges follow: cysteine 4/cysteine 18, cysteine 11/cysteine 23, cysteine 15/cysteine 64, cysteine 17/cysteine 52, and cysteine 25/cysteine 50. Position 69 is an asparagine amide (asparagine 69).

It belongs to the spiderine family. Spiderine subfamily. As to expression, expressed by the venom gland.

It is found in the secreted. Its function is as follows. Weak blocker of vertebrate P/Q-, N- and L-type voltage-gated calcium channels (Cav1 and Cav2). Is both paralytic and lethal when injected into lepidopteran larvae. Is not toxic to mice. The protein is Omega-oxotoxin-Ol1a of Oxyopes lineatus (Lynx spider).